Consider the following 743-residue polypeptide: Iron-sulfur clusters transporter ABCB7, mitochondrial (743 aa).

The transit peptide at 1-19 (MAPLLVPLKCGFHMQRRKL) directs the protein to the mitochondrion. Residues 20-131 (SLLLQRSSAV…KDRPDLRARV (112 aa)) are Mitochondrial matrix-facing. The disordered stretch occupies residues 45–64 (ERNTYLLSDPSRESSTWANN). Residues 131-427 (VVISLSLLAG…LGTVYRETRQ (297 aa)) form the ABC transmembrane type-1 domain. The helical transmembrane segment at 132-152 (VISLSLLAGAKITNVMVPFMF) threads the bilayer. Topologically, residues 153-168 (KYAVDSLNQMSGHMLN) are mitochondrial intermembrane. A helical membrane pass occupies residues 169–189 (LSDAPNTVVTMATAVLIGYGV). Residues 190-250 (SRTGSALFNE…SKAIDRGTRG (61 aa)) lie on the Mitochondrial matrix side of the membrane. Residues 251–271 (ISFVLSALVFNLGPTLFEMML) form a helical membrane-spanning segment. Residues 272-281 (VSGILYYKCG) are Mitochondrial intermembrane-facing. Residues 282–302 (GHFALVTLGTLSAYTAFTVAV) traverse the membrane as a helical segment. Residues 303-364 (TQWRTQFRIE…ESSSLKTTST (62 aa)) are Mitochondrial matrix-facing. Residues 306–310 (RTQFR) and 369–372 (NFGQ) each bind glutathione. The helical transmembrane segment at 365–385 (LAMLNFGQSAIFSVGLTAIMV) threads the bilayer. Over 386-400 (LASKGIMSGTMTVGD) the chain is Mitochondrial intermembrane. Residues 401–421 (LVMVNGLLFQLSLPLNFLGTV) traverse the membrane as a helical segment. Glutathione is bound at residue G419. The Mitochondrial matrix portion of the chain corresponds to 422–743 (YRETRQALID…SVKGCGNCSC (322 aa)). An ABC transporter domain is found at 463–697 (IRFEDVYFEY…PGSLYANLWN (235 aa)). ATP contacts are provided by residues Y472 and 496–503 (GGSGSGKS). Residues 703–724 (ILSNGSKPEPVPERVSQKEEER) are disordered. Residues 712–724 (PVPERVSQKEEER) are compositionally biased toward basic and acidic residues.

Belongs to the ABC transporter superfamily. ABCB family. Heavy Metal importer (TC 3.A.1.210) subfamily. In terms of assembly, homodimer.

Its subcellular location is the mitochondrion inner membrane. The catalysed reaction is (glutathione)4[2Fe(III)-2S] cluster(in) + ATP + H2O = (glutathione)4[2Fe(III)-2S] cluster(out) + ADP + phosphate + H(+). In terms of biological role, exports glutathione-coordinated iron-sulfur clusters such as [2Fe-2S]-(GS)4 cluster from the mitochondria to the cytosol in an ATP-dependent manner allowing the assembly of the cytosolic iron-sulfur (Fe/S) cluster-containing proteins and participates in iron homeostasis. May play a role in cadmium, zinc and mercury detoxification. The polypeptide is Iron-sulfur clusters transporter ABCB7, mitochondrial (abcb7) (Danio rerio (Zebrafish)).